A 209-amino-acid polypeptide reads, in one-letter code: Ubiquitin-conjugating enzyme E2 S (209 aa).

The UBC core domain occupies 14–160 (QTIRQVMREL…ARMMTEIHAQ (147 aa)). Residue Cys98 is the Glycyl thioester intermediate of the active site. The tract at residues 164-209 (CAAGAAGDSKDDDGPSTKKHAGLDKKLQDKKKEKLLKEKKRMLKRL) is disordered. The segment covering 171 to 199 (DSKDDDGPSTKKHAGLDKKLQDKKKEKLL) has biased composition (basic and acidic residues). Residues 200–209 (KEKKRMLKRL) show a composition bias toward basic residues.

Belongs to the ubiquitin-conjugating enzyme family.

It catalyses the reaction S-ubiquitinyl-[E1 ubiquitin-activating enzyme]-L-cysteine + [E2 ubiquitin-conjugating enzyme]-L-cysteine = [E1 ubiquitin-activating enzyme]-L-cysteine + S-ubiquitinyl-[E2 ubiquitin-conjugating enzyme]-L-cysteine.. Its pathway is protein modification; protein ubiquitination. Its function is as follows. Catalyzes the covalent attachment of ubiquitin to other proteins. Acts as an essential factor of the anaphase promoting complex/cyclosome (APC/C), a cell cycle-regulated ubiquitin ligase that controls progression through mitosis. Acts by specifically elongating polyubiquitin chains initiated by the E2 enzyme vih/UbcH10 on APC/C substrates, enhancing the degradation of APC/C substrates by the proteasome and promoting mitotic exit. This chain is Ubiquitin-conjugating enzyme E2 S, found in Drosophila ananassae (Fruit fly).